A 43-amino-acid chain; its full sequence is Protein PsbN (43 aa).

A helical transmembrane segment spans residues threonine 5–phenylalanine 27.

Belongs to the PsbN family.

It localises to the plastid. Its subcellular location is the cyanelle thylakoid membrane. May play a role in photosystem I and II biogenesis. The polypeptide is Protein PsbN (Cyanophora paradoxa).